Reading from the N-terminus, the 66-residue chain is Large ribosomal subunit protein bL35 (66 aa).

Basic residues-rich tracts occupy residues Met1–Arg16 and Lys23–Arg45. The tract at residues Met1–Lys66 is disordered.

This sequence belongs to the bacterial ribosomal protein bL35 family.

The sequence is that of Large ribosomal subunit protein bL35 from Latilactobacillus sakei subsp. sakei (strain 23K) (Lactobacillus sakei subsp. sakei).